Here is an 826-residue protein sequence, read N- to C-terminus: Capsid-associated protein Vp91 (826 aa).

The first 18 residues, 1–18 (MSDVVLLVLAIIFIIIFV), serve as a signal peptide directing secretion. The segment at 147–196 (CVPINPCDTRAPGLYAMDEHLLDALVHSQHLDKDYTINAHLQHPTLYLRC) adopts a C2HC BV-type zinc-finger fold. 2 cysteine pairs are disulfide-bonded: C207-C220 and C260-C273. N210 carries N-linked (GlcNAc...) asparagine; by host glycosylation. The 59-residue stretch at 223–281 (NELCQGRPDGYVLDYFPETLLVNEFVECYESKHVVKQCPEQHVFDRQLMTCVQAHPCAF) folds into the Chitin-binding type-2 domain. Residues N333, N371, N413, N510, N520, and N609 are each glycosylated (N-linked (GlcNAc...) asparagine; by host). The segment at 651 to 679 (GDGDHWGPDLPPPVQPDSEPDESEPEPEV) is disordered. Residues 668 to 677 (SEPDESEPEP) are compositionally biased toward acidic residues. The N-linked (GlcNAc...) asparagine; by host glycan is linked to N722.

The protein localises to the virion. In terms of biological role, probable capsid-associated protein. The sequence is that of Capsid-associated protein Vp91 from Epiphyas postvittana nucleopolyhedrovirus (EppoMNPV).